The chain runs to 354 residues: MGCTLSAEDKAAVERSKMIDRNLREDGEKAAREVKLLLLGAGESGKSTIVKQMKIIHEAGYSEEECKQYKAVVYSNTIQSIIAIIRAMGRLKIDFGDPTRADDARQLFVLAGAAEEGFMTADVAGVIKRLWKDSGVQACFNRSREYQLNDSAAYYLNDLDRIAQTSYIPTQQDVLRTRVKTTGIVETHFTFKDLHFKMFDVGGQRSERKKWIHCFEGVTAIIFCVALSDYDLVLAEDEEMNRMHESMKLFDSICNNKWFTDTSIILFLNKKDLFEEKIKRSPLTICYPEYAGSNTYEEAAAYIQCQFEDLNKRKDTKEIYTHFTCATDTKNVQFVFDAVTDVIIKNNLKDCGLF.

Residue glycine 2 is the site of N-myristoyl glycine attachment. Cysteine 3 carries the S-palmitoyl cysteine lipid modification. In terms of domain architecture, G-alpha spans 32–354 (REVKLLLLGA…KNNLKDCGLF (323 aa)). The interval 35–48 (KLLLLGAGESGKST) is G1 motif. GTP contacts are provided by residues 43–48 (ESGKST), 150–151 (DS), and 175–178 (LRTR). Position 47 (serine 47) interacts with Mg(2+). The interval 173 to 181 (DVLRTRVKT) is G2 motif. Threonine 181 provides a ligand contact to Mg(2+). The segment at 196–205 (FKMFDVGGQR) is G3 motif. GTP is bound by residues 200–204 (DVGGQ), 269–272 (NKKD), and alanine 326. The segment at 265-272 (ILFLNKKD) is G4 motif. Positions 324–329 (TCATDT) are G5 motif.

It belongs to the G-alpha family. G(i/o/t/z) subfamily. As to quaternary structure, heterotrimeric G proteins are composed of 3 units; alpha, beta and gamma. The alpha chain contains the guanine nucleotide binding site. Part of a spindle orientation complex. Identified in complex with the beta subunit GNB1 and the gamma subunit GNG1. Identified in complex with the beta subunit GNB1 and the gamma subunit GNG2. GTP binding causes dissociation of the heterotrimer, liberating the individual subunits so that they can interact with downstream effector proteins. Post-translationally, myristoylation at Gly-2 is required for membrane anchoring before palmitoylation. Palmitoylation at Cys-3 varies with membrane lipid composition.

The protein resides in the nucleus. It is found in the cytoplasm. Its subcellular location is the cell membrane. It localises to the cytoskeleton. The protein localises to the microtubule organizing center. The protein resides in the centrosome. It is found in the cell cortex. Its subcellular location is the membrane. The catalysed reaction is GTP + H2O = GDP + phosphate + H(+). Functionally, guanine nucleotide-binding proteins (G proteins) function as transducers downstream of G protein-coupled receptors (GPCRs) in numerous signaling cascades. The alpha chain contains the guanine nucleotide binding site and alternates between an active, GTP-bound state and an inactive, GDP-bound state. Signaling by an activated GPCR promotes GDP release and GTP binding. The alpha subunit has a low GTPase activity that converts bound GTP to GDP, thereby terminating the signal. Both GDP release and GTP hydrolysis are modulated by numerous regulatory proteins. Signaling is mediated via effector proteins, such as adenylate cyclase. Inhibits adenylate cyclase activity of ADCY1, ADCY5 and ADCY6, leading to decreased intracellular cAMP levels. Required for cortical dynein-dynactin complex recruitment during metaphase. This Gallus gallus (Chicken) protein is Guanine nucleotide-binding protein G(i) subunit alpha-1 (GNAI1).